Here is a 7152-residue protein sequence, read N- to C-terminus: Replicase polyprotein 1ab (7152 aa).

The 121-residue stretch at 54–174 (YDNHVKIDCR…HKWFQFCRLY (121 aa)) folds into the CoV Nsp1 globular domain. The region spanning 192–222 (FSVEDAYAEVHAEPKGKYSQKAYALLRQYRG) is the BetaCoV Nsp1 C-terminal domain. The CoV Nsp2 N-terminal domain maps to 226 to 488 (VLFVDQYGCD…LITHALYLDY (263 aa)). C365, C370, C386, and C389 together coordinate Zn(2+). The interval 365 to 389 (CFNDNCDFYGWVSGNMMDGFSCPLC) is C4. In terms of domain architecture, CoV Nsp2 middle spans 493–681 (CGNLEQNHIL…VNKFYTFFKL (189 aa)). The CoV Nsp2 C-terminal domain occupies 697–809 (LKTINGLVCI…LDQAWRFPCA (113 aa)). The region spanning 811 to 923 (RKVNFNEKPV…MYCTFAIEDV (113 aa)) is the Ubiquitin-like 1 domain. Tandem repeats lie at residues 945 to 954 (NDDEDVVTGD), 955 to 964 (NDDEDVVTGD), 965 to 974 (NDDEDVVTGD), 975 to 984 (NDDEDVVTGD), 985 to 994 (NDDEDVVTGD), 995 to 1004 (NDDEDVVTGD), 1005 to 1014 (NDDEDVVTGD), 1015 to 1024 (NDDEDVVTGD), 1025 to 1034 (NDDEDVVTGD), 1035 to 1044 (NDDEDVVTGD), and 1045 to 1054 (NDDEDVVTGD). The segment at 945–1054 (NDDEDVVTGD…NDDEDVVTGD (110 aa)) is 11 X 10 AA tandem repeat of N-[DN]-D-E-D-V-V-T-G-D. The tract at residues 947 to 1036 (DEDVVTGDND…DEDVVTGDND (90 aa)) is disordered. Residues 1093-1343 (VFNDVYNDAL…VCFVKGDIIN (251 aa)) form the Peptidase C16 1 domain. The For PL1-PRO activity role is filled by C1131. C1208, C1211, C1234, and C1236 together coordinate Zn(2+). The C4-type 1 zinc finger occupies 1208-1236 (CLKCGFSFDLNGLDAVFFYGDIVSHVCKC). Catalysis depends on for PL1-PRO activity residues H1282 and D1293. Residues 1321–1492 (ELAQLYGLCI…IIQKCQITSV (172 aa)) form the Macro domain. The 72-residue stretch at 1548 to 1619 (NDVRDYLLSK…TVNQVCVLLA (72 aa)) folds into the DPUP domain. The 56-residue stretch at 1619–1674 (AKKIDVLLTVDGVNFKSISLTVGEVFGKILGNVFCDGIDVTKLKCSDFYADKILYQ) folds into the Ubiquitin-like 2 domain. The 261-residue stretch at 1688–1948 (SSFGFDQQQL…MVAYNPDLSQ (261 aa)) folds into the Peptidase C16 2 domain. C1727 serves as the catalytic For PL2-PRO activity. C1805, C1807, C1839, and C1841 together coordinate Zn(2+). The C4-type 2 zinc-finger motif lies at 1805-1841 (CDCGIKQESRVGVDAVMHFGTLAKTDLFNGYKIGCNC). Active-site for PL2-PRO activity residues include H1884 and D1898. The Nucleic acid-binding domain occupies 1962 to 2063 (IKAQFKPFAK…TYFNKPSFKS (102 aa)). The 150-residue stretch at 2078-2227 (ESQGNVVTSV…NDKTIFYTTE (150 aa)) folds into the G2M domain. The next 3 membrane-spanning stretches (helical) occupy residues 2196–2216 (AIEF…LLHF), 2257–2277 (FLVV…NVIF), and 2288–2308 (FPIF…LVTI). An HD1 region spans residues 2196–2433 (AIEFYGFLKW…FVLLRFYIVV (238 aa)). The region spanning 2293 to 2354 (GRIVMWIKAT…AIDFVQYEVD (62 aa)) is the 3Ecto domain. 2 disulfides stabilise this stretch: C2309–C2333 and C2324–C2330. The next 2 helical transmembrane spans lie at 2371–2391 (LVIG…LIGL) and 2413–2433 (FIVF…YIVV). The interval 2441–2531 (GFIRHIVYGC…ELKRPVNPTD (91 aa)) is Y1. The CoV Nsp3 Y domain occupies 2441–2808 (GFIRHIVYGC…LTTPFSLKGG (368 aa)). Positions 2445, 2450, 2455, 2458, 2491, 2494, 2498, and 2501 each coordinate Zn(2+). Residues 2445–2458 (HIVYGCNKAGCLFC) are ZF1. The interval 2491–2501 (CVKHQWNCFNC) is ZF2. The segment at 2532–2624 (ASHYVVTDIK…LVDKKLITTA (93 aa)) is Y2. The coV-Y stretch occupies residues 2532 to 2808 (ASHYVVTDIK…LTTPFSLKGG (277 aa)). A Y3 region spans residues 2625–2707 (CNGISVTQTM…KSMISAVAAG (83 aa)). Residues 2708–2808 (LEFTDENYNN…LTTPFSLKGG (101 aa)) are Y4. A run of 5 helical transmembrane segments spans residues 2814–2834 (LLYI…ALLP), 3089–3109 (ASSI…YYLI), 3121–3141 (VVVI…VFQV), 3148–3168 (VYAC…SVIM), and 3173–3193 (IVMY…AMVI). The tract at residues 2814 to 3193 (LLYILFFISL…FCVTYVAMVI (380 aa)) is HD2. Positions 3207-3304 (IGVNVCNDST…TASVSTSFLQ (98 aa)) constitute a Nsp4C domain. One can recognise a Peptidase C30 domain in the interval 3305–3607 (SGIVKMVSPT…YQQLAGVKLQ (303 aa)). Catalysis depends on for 3CL-PRO activity residues H3345 and C3449. 7 helical membrane passes run 3621–3641 (ILIS…WTIF), 3646–3666 (THMI…MLLV), 3671–3691 (FYLT…NYLV), 3714–3734 (FTYV…IFIT), 3742–3762 (IFSL…WYFG), 3770–3790 (LLFI…SLAI), and 3813–3833 (LILL…GFFS). Positions 3621-3833 (ILISTFLFSC…ILSCYWGFFS (213 aa)) are HD3. The 89-residue stretch at 3895–3983 (SKLTDVKCAN…DYVQDSTVLQ (89 aa)) folds into the RdRp Nsp7 cofactor domain. In terms of domain architecture, RdRp Nsp8 cofactor spans 3984–4180 (ALQSEFVNMA…YNEVANAVMQ (197 aa)). Positions 4181-4290 (NNELMPHKLK…GTLSSTIRLQ (110 aa)) constitute a Nsp9 ssRNA-binding domain. In terms of domain architecture, ExoN/MTase coactivator spans 4291–4428 (AGVATEYAAN…CVGSGVAVQS (138 aa)). 8 residues coordinate Zn(2+): C4364, C4367, H4373, C4380, C4406, C4409, C4417, and C4419. Zinc fingers lie at residues 4364–4380 (CIYC…DGLC) and 4406–4419 (CQVC…SCSC). The NiRAN domain maps to 4433-4688 (FLNRVRGTSV…DCELFVNDSY (256 aa)). Mn(2+) is bound by residues N4636 and D4645. One can recognise a Nsp12 Interface domain in the interval 4689–4787 (RQFDLVQYDF…MNLDVDTHRY (99 aa)). Zn(2+) is bound by residues H4718, C4724, C4729, C4733, and C4910. Positions 4788 to 5355 (RLSLKDLLLY…NMYLKSAVMQ (568 aa)) constitute a Nsp12 RNA-dependent RNA polymerase domain. Residues 4790 to 5004 (SLKDLLLYAA…HQKCLKSIAA (215 aa)) form a rdRp Fingers N-ter region. A rdRp Palm N-ter region spans residues 5005–5043 (TRGVPVVIGTTKFYGGWDDMLRHLIKDVDNPVLMGWDYP). The region spanning 5035–5197 (PVLMGWDYPK…CYNSDYASKG (163 aa)) is the RdRp catalytic domain. Residues 5044 to 5102 (KCDRAMPNILRIVSSLVLARKHEFCCSHGDRFYRLANECAQVLSEIVMCGGCYYVKPGG) form a rdRp Fingers C-ter region. Residues H5065, C5068, and C5069 each coordinate Zn(2+). Positions 5103–5238 (TSSGDATTAF…TNGPHEFCSQ (136 aa)) are rdRp Palm C-ter. Residues S5182, D5183, and D5184 contribute to the active site. The segment at 5239–5355 (HTMLVKIDGD…NMYLKSAVMQ (117 aa)) is rdRp Thumb. One can recognise a CV ZBD domain in the interval 5356–5468 (SVGACVVCSS…DDFNKIASCK (113 aa)). Zn(2+) contacts are provided by C5360, C5363, C5371, C5374, C5381, C5384, H5388, H5394, C5405, C5410, C5427, and H5430. The (+)RNA virus helicase ATP-binding domain maps to 5611 to 5792 (SVPLLFQTNV…MCCLGPDIFL (182 aa)). 5636-5643 (GPPGTGKS) lines the ATP pocket. A (+)RNA virus helicase C-terminal domain is found at 5793–5962 (GNCYRCPKEI…TLSRLHCTTN (170 aa)). The ExoN domain occupies 6029 to 6244 (FFITKDEAIK…RCLAIYDCFC (216 aa)). Active-site residues include D6047, E6049, and E6148. Residues C6164, C6167, C6183, H6186, H6214, C6218, and H6221 each coordinate Zn(2+). Active-site residues include H6225 and D6230. C6236 is a Zn(2+) binding site. In terms of domain architecture, N7-MTase spans 6253-6479 (YPIISNEVSI…NLWNTFTMLQ (227 aa)). 6288–6294 (DIGNPKG) is a binding site for S-adenosyl-L-methionine. Positions 6366 to 6380 (CNGGSLYVNKHAFHT) are gpppA-binding. Zn(2+) is bound by residues C6404, C6425, C6436, and H6439. The Nsp15 N-terminal oligomerization domain occupies 6480–6540 (SLENVIYNLV…NIAVELFTKR (61 aa)). The AV-Nsp11N/CoV-Nsp15M domain occupies 6541 to 6661 (SIRHHPELKI…FAMRKDGDDV (121 aa)). The region spanning 6711–6850 (EPRSDLERDF…NDNKIMTFYP (140 aa)) is the NendoU domain. Catalysis depends on residues H6741, H6756, K6796, K6899, D6983, K7023, and E7056. One can recognise a Nidovirus-type SAM-dependent 2'-O-MTase domain in the interval 6855–7149 (TSDWKPGYSM…KEIFVGDSLV (295 aa)).

It belongs to the coronaviruses polyprotein 1ab family. As to quaternary structure, interacts with host PHB and PHB2. Interacts with papain-like protease nsp3 and non-structural protein 6. In terms of assembly, monomer. Homodimer. Only the homodimer shows catalytic activity. As to quaternary structure, interacts with nsp8 and nsp12 to form the replication-transcription complex (RTC): nsp12, nsp7, two subunits of nsp8, and up to two subunits of nsp13. Interacts with nsp7, nsp13 and nsp12 to form the replication-transcription complex (RTC): nsp12, nsp7, two subunits of nsp8, and up to two subunits of nsp13. In terms of assembly, interacts with nsp12. As to quaternary structure, interacts with proofreading exoribonuclease nsp14 and 2'-O-methyltransferase nsp16; these interactions enhance nsp14 and nsp16 enzymatic activities. Interacts with nsp7 and nsp8 to form the replication-transcription complex (RTC): nsp12, nsp7, two subunits of nsp8, and up to two subunits of nsp13. Interacts with nsp9. In terms of assembly, interacts with nsp8 to form the replication-transcription complex (RTC): nsp12, nsp7, two subunits of nsp8, and up to two subunits of nsp13. Mn(2+) is required as a cofactor. It depends on Mg(2+) as a cofactor. Post-translationally, specific enzymatic cleavages in vivo by its own proteases yield mature proteins. 3CL-PRO and PL-PRO proteinases are autocatalytically processed.

It is found in the host membrane. The protein resides in the host cytoplasm. The protein localises to the host perinuclear region. Its subcellular location is the host endoplasmic reticulum-Golgi intermediate compartment. The enzyme catalyses RNA(n) + a ribonucleoside 5'-triphosphate = RNA(n+1) + diphosphate. It catalyses the reaction ATP + H2O = ADP + phosphate + H(+). It carries out the reaction Thiol-dependent hydrolysis of ester, thioester, amide, peptide and isopeptide bonds formed by the C-terminal Gly of ubiquitin (a 76-residue protein attached to proteins as an intracellular targeting signal).. The catalysed reaction is a 5'-end (N(7)-methyl 5'-triphosphoguanosine)-ribonucleoside in mRNA + S-adenosyl-L-methionine = a 5'-end (N(7)-methyl 5'-triphosphoguanosine)-(2'-O-methyl-ribonucleoside) in mRNA + S-adenosyl-L-homocysteine + H(+). The enzyme catalyses uridylyl-uridylyl-ribonucleotide-RNA = a 3'-end uridylyl-2',3'-cyclophospho-uridine-RNA + a 5'-end dephospho-ribonucleoside-RNA. It catalyses the reaction a 5'-end diphospho-ribonucleoside in mRNA + GTP + H(+) = a 5'-end (5'-triphosphoguanosine)-ribonucleoside in mRNA + diphosphate. It carries out the reaction a 5'-end (5'-triphosphoguanosine)-ribonucleoside in mRNA + S-adenosyl-L-methionine = a 5'-end (N(7)-methyl 5'-triphosphoguanosine)-ribonucleoside in mRNA + S-adenosyl-L-homocysteine. The replicase polyprotein of coronaviruses is a multifunctional protein: it contains the activities necessary for the transcription of negative stranded RNA, leader RNA, subgenomic mRNAs and progeny virion RNA as well as proteinases responsible for the cleavage of the polyprotein into functional products. Functionally, inhibits host translation by interacting with the 40S ribosomal subunit. The nsp1-40S ribosome complex further induces an endonucleolytic cleavage near the 5'UTR of host mRNAs, targeting them for degradation. Viral mRNAs are not susceptible to nsp1-mediated endonucleolytic RNA cleavage thanks to the presence of a 5'-end leader sequence and are therefore protected from degradation. By suppressing host gene expression, nsp1 facilitates efficient viral gene expression in infected cells and evasion from host immune response. Its function is as follows. May play a role in the modulation of host cell survival signaling pathway by interacting with host PHB and PHB2. Indeed, these two proteins play a role in maintaining the functional integrity of the mitochondria and protecting cells from various stresses. In terms of biological role, responsible for the cleavages located at the N-terminus of the replicase polyprotein. In addition, PL-PRO possesses a deubiquitinating/deISGylating activity and processes both 'Lys-48'- and 'Lys-63'-linked polyubiquitin chains from cellular substrates. Participates together with nsp4 in the assembly of virally-induced cytoplasmic double-membrane vesicles necessary for viral replication. Antagonizes innate immune induction of type I interferon by blocking the phosphorylation, dimerization and subsequent nuclear translocation of host IRF3. Also prevents host NF-kappa-B signaling. Participates in the assembly of virally-induced cytoplasmic double-membrane vesicles necessary for viral replication. Functionally, cleaves the C-terminus of replicase polyprotein at 11 sites. Recognizes substrates containing the core sequence [ILMVF]-Q-|-[SGACN]. Also able to bind an ADP-ribose-1''-phosphate (ADRP). Its function is as follows. Plays a role in the initial induction of autophagosomes from host endoplasmic reticulum. Later, limits the expansion of these phagosomes that are no longer able to deliver viral components to lysosomes. In terms of biological role, forms a hexadecamer with nsp8 (8 subunits of each) that may participate in viral replication by acting as a primase. Alternatively, may synthesize substantially longer products than oligonucleotide primers. Forms a hexadecamer with nsp7 (8 subunits of each) that may participate in viral replication by acting as a primase. Alternatively, may synthesize substantially longer products than oligonucleotide primers. Functionally, forms a primer, NSP9-pU, which is utilized by the polymerase for the initiation of RNA chains. Interacts with ribosome signal recognition particle RNA (SRP). Together with NSP8, suppress protein integration into the cell membrane, thereby disrupting host immune defenses. Its function is as follows. Plays a pivotal role in viral transcription by stimulating both nsp14 3'-5' exoribonuclease and nsp16 2'-O-methyltransferase activities. Therefore plays an essential role in viral mRNAs cap methylation. In terms of biological role, RNA-directed RNA polymerase that catalyzes the transcription of viral genomic and subgenomic RNAs. Acts in complex with nsp7 and nsp8 to transcribe both the minus and positive strands of genomic RNA. The kinase-like NiRAN domain of NSP12 attaches one or more nucleotides to the amino terminus of NSP9, forming a covalent RNA-protein intermediate that serves as transcription/replication primer. Subgenomic RNAs (sgRNAs) are formed by discontinuous transcription: The polymerase has the ability to pause at transcription-regulating sequences (TRS) and jump to the leader TRS, resulting in a major deletion. This creates a series of subgenomic RNAs that are replicated, transcribed and translated. In addition, Nsp12 is a subunit of the viral RNA capping enzyme that catalyzes the RNA guanylyltransferase reaction for genomic and sub-genomic RNAs. Subsequently, the NiRAN domain transfers RNA to GDP, and forms the core cap structure GpppA-RNA. Multi-functional protein with a zinc-binding domain in N-terminus displaying RNA and DNA duplex-unwinding activities with 5' to 3' polarity. Activity of helicase is dependent on magnesium. Functionally, plays a role in viral RNA synthesis through two distinct activities. The N7-guanine methyltransferase activity plays a role in the formation of the cap structure GpppA-RNA. The proofreading exoribonuclease reduces the sensitivity of the virus to RNA mutagens during replication. This activity acts on both ssRNA and dsRNA in a 3'-5' direction. Its function is as follows. Plays a role in viral transcription/replication and prevents the simultaneous activation of host cell dsRNA sensors, such as MDA5/IFIH1, OAS, and PKR. Acts by degrading the 5'-polyuridines generated during replication of the poly(A) region of viral genomic and subgenomic RNAs. Catalyzes a two-step reaction in which a 2'3'-cyclic phosphate (2'3'-cP) is first generated by 2'-O transesterification, which is then hydrolyzed to a 3'-phosphate (3'-P). If not degraded, poly(U) RNA would hybridize with poly(A) RNA tails and activate host dsRNA sensors. In terms of biological role, methyltransferase that mediates mRNA cap 2'-O-ribose methylation to the 5'-cap structure of viral mRNAs. N7-methyl guanosine cap is a prerequisite for binding of nsp16. Therefore plays an essential role in viral mRNAs cap methylation which is essential to evade immune system. This chain is Replicase polyprotein 1ab (rep), found in Homo sapiens (Human).